The following is a 332-amino-acid chain: Thiamine thiazole synthase (332 aa).

Substrate contacts are provided by residues cysteine 87, 108-109, glycine 116, and valine 184; that span reads EA. 2,3-didehydroalanine (Cys) is present on cysteine 221. Substrate-binding positions include aspartate 223, histidine 238, methionine 290, and 300–302; that span reads RMG.

This sequence belongs to the THI4 family. In terms of assembly, homooctamer. Fe cation is required as a cofactor. During the catalytic reaction, a sulfide is transferred from Cys-221 to a reaction intermediate, generating a dehydroalanine residue.

It localises to the cytoplasm. It is found in the nucleus. It catalyses the reaction [ADP-thiazole synthase]-L-cysteine + glycine + NAD(+) = [ADP-thiazole synthase]-dehydroalanine + ADP-5-ethyl-4-methylthiazole-2-carboxylate + nicotinamide + 3 H2O + 2 H(+). In terms of biological role, involved in biosynthesis of the thiamine precursor thiazole. Catalyzes the conversion of NAD and glycine to adenosine diphosphate 5-(2-hydroxyethyl)-4-methylthiazole-2-carboxylic acid (ADT), an adenylated thiazole intermediate. The reaction includes an iron-dependent sulfide transfer from a conserved cysteine residue of the protein to a thiazole intermediate. The enzyme can only undergo a single turnover, which suggests it is a suicide enzyme. May have additional roles in adaptation to various stress conditions and in DNA damage tolerance. The polypeptide is Thiamine thiazole synthase (Aspergillus fumigatus (strain ATCC MYA-4609 / CBS 101355 / FGSC A1100 / Af293) (Neosartorya fumigata)).